The chain runs to 200 residues: Holliday junction branch migration complex subunit RuvA (200 aa).

Positions 1–63 are domain I; that stretch reads MIASVRGEVL…EDSMTLYGFP (63 aa). Positions 64-142 are domain II; the sequence is DSESKELFGL…AVASTSGAVP (79 aa). Residues 142–146 form a flexible linker region; that stretch reads PLGAG. The tract at residues 147-200 is domain III; the sequence is GGGSVRDQIVEALVGLGFPAKQAEQAADSVLAEAPESTTSTALRSALSLLGKTR.

It belongs to the RuvA family. In terms of assembly, homotetramer. Forms an RuvA(8)-RuvB(12)-Holliday junction (HJ) complex. HJ DNA is sandwiched between 2 RuvA tetramers; dsDNA enters through RuvA and exits via RuvB. An RuvB hexamer assembles on each DNA strand where it exits the tetramer. Each RuvB hexamer is contacted by two RuvA subunits (via domain III) on 2 adjacent RuvB subunits; this complex drives branch migration. In the full resolvosome a probable DNA-RuvA(4)-RuvB(12)-RuvC(2) complex forms which resolves the HJ.

It is found in the cytoplasm. Functionally, the RuvA-RuvB-RuvC complex processes Holliday junction (HJ) DNA during genetic recombination and DNA repair, while the RuvA-RuvB complex plays an important role in the rescue of blocked DNA replication forks via replication fork reversal (RFR). RuvA specifically binds to HJ cruciform DNA, conferring on it an open structure. The RuvB hexamer acts as an ATP-dependent pump, pulling dsDNA into and through the RuvAB complex. HJ branch migration allows RuvC to scan DNA until it finds its consensus sequence, where it cleaves and resolves the cruciform DNA. This chain is Holliday junction branch migration complex subunit RuvA, found in Rhodococcus jostii (strain RHA1).